A 205-amino-acid polypeptide reads, in one-letter code: Outer-membrane lipoprotein LolB (205 aa).

A signal peptide spans Met-1–Gly-17. Cys-18 is lipidated: N-palmitoyl cysteine. Cys-18 carries S-diacylglycerol cysteine lipidation.

Belongs to the LolB family. In terms of assembly, monomer.

It localises to the cell outer membrane. In terms of biological role, plays a critical role in the incorporation of lipoproteins in the outer membrane after they are released by the LolA protein. This Pseudomonas fluorescens (strain ATCC BAA-477 / NRRL B-23932 / Pf-5) protein is Outer-membrane lipoprotein LolB.